The chain runs to 246 residues: 1-(5-phosphoribosyl)-5-[(5-phosphoribosylamino)methylideneamino] imidazole-4-carboxamide isomerase (246 aa).

Residue aspartate 8 is the Proton acceptor of the active site. Aspartate 129 functions as the Proton donor in the catalytic mechanism.

Belongs to the HisA/HisF family.

It is found in the cytoplasm. The catalysed reaction is 1-(5-phospho-beta-D-ribosyl)-5-[(5-phospho-beta-D-ribosylamino)methylideneamino]imidazole-4-carboxamide = 5-[(5-phospho-1-deoxy-D-ribulos-1-ylimino)methylamino]-1-(5-phospho-beta-D-ribosyl)imidazole-4-carboxamide. It participates in amino-acid biosynthesis; L-histidine biosynthesis; L-histidine from 5-phospho-alpha-D-ribose 1-diphosphate: step 4/9. The sequence is that of 1-(5-phosphoribosyl)-5-[(5-phosphoribosylamino)methylideneamino] imidazole-4-carboxamide isomerase from Methylocella silvestris (strain DSM 15510 / CIP 108128 / LMG 27833 / NCIMB 13906 / BL2).